A 243-amino-acid chain; its full sequence is Probable 2-phosphosulfolactate phosphatase (243 aa).

This sequence belongs to the ComB family. Requires Mg(2+) as cofactor.

The catalysed reaction is (2R)-O-phospho-3-sulfolactate + H2O = (2R)-3-sulfolactate + phosphate. The chain is Probable 2-phosphosulfolactate phosphatase from Prochlorococcus marinus (strain SARG / CCMP1375 / SS120).